Reading from the N-terminus, the 503-residue chain is Aspartyl/glutamyl-tRNA(Asn/Gln) amidotransferase subunit B (503 aa).

Belongs to the GatB/GatE family. GatB subfamily. Heterotrimer of A, B and C subunits.

The catalysed reaction is L-glutamyl-tRNA(Gln) + L-glutamine + ATP + H2O = L-glutaminyl-tRNA(Gln) + L-glutamate + ADP + phosphate + H(+). The enzyme catalyses L-aspartyl-tRNA(Asn) + L-glutamine + ATP + H2O = L-asparaginyl-tRNA(Asn) + L-glutamate + ADP + phosphate + 2 H(+). Functionally, allows the formation of correctly charged Asn-tRNA(Asn) or Gln-tRNA(Gln) through the transamidation of misacylated Asp-tRNA(Asn) or Glu-tRNA(Gln) in organisms which lack either or both of asparaginyl-tRNA or glutaminyl-tRNA synthetases. The reaction takes place in the presence of glutamine and ATP through an activated phospho-Asp-tRNA(Asn) or phospho-Glu-tRNA(Gln). The protein is Aspartyl/glutamyl-tRNA(Asn/Gln) amidotransferase subunit B of Cereibacter sphaeroides (strain ATCC 17025 / ATH 2.4.3) (Rhodobacter sphaeroides).